The sequence spans 825 residues: Translation initiation factor IF-2 (825 aa).

Composition is skewed to basic and acidic residues over residues 1–19, 35–45, 70–98, and 113–122; these read MTKK…DNKK, RKGEKKTEGKR, LLKD…EYKK, and KKVESVEKPA. The disordered stretch occupies residues 1–239; that stretch reads MTKKQENETS…TQRKDRPLPE (239 aa). Low complexity predominate over residues 158 to 169; sequence PSSSRRPSSRPS. The segment covering 181–191 has biased composition (basic residues); the sequence is GRRRKSGKPGR. The segment covering 194-208 has biased composition (polar residues); that stretch reads QNSYADQGRGANSNR. Basic residues predominate over residues 211–220; the sequence is QRKRKNKKHQ. Residues 326–495 enclose the tr-type G domain; the sequence is VRPPVVTIMG…ILEADMLELK (170 aa). The tract at residues 335–342 is G1; the sequence is GHVDHGKT. A GTP-binding site is contributed by 335 to 342; that stretch reads GHVDHGKT. The tract at residues 360–364 is G2; sequence GITQN. The G3 stretch occupies residues 381-384; that stretch reads DTPG. GTP-binding positions include 381–385 and 435–438; these read DTPGH and NKMD. Residues 435–438 form a G4 region; it reads NKMD. The interval 471-473 is G5; the sequence is SAK.

Belongs to the TRAFAC class translation factor GTPase superfamily. Classic translation factor GTPase family. IF-2 subfamily.

It localises to the cytoplasm. Its function is as follows. One of the essential components for the initiation of protein synthesis. Protects formylmethionyl-tRNA from spontaneous hydrolysis and promotes its binding to the 30S ribosomal subunits. Also involved in the hydrolysis of GTP during the formation of the 70S ribosomal complex. This Lactobacillus delbrueckii subsp. bulgaricus (strain ATCC BAA-365 / Lb-18) protein is Translation initiation factor IF-2.